The sequence spans 313 residues: 2-phosphoglycerate kinase (313 aa).

Positions 8–95 (SRILVKDKEY…LWRRVLKKHS (88 aa)) constitute an ATP-cone domain.

This sequence belongs to the 2-phosphoglycerate kinase family. A divalent metal cation is required as a cofactor.

It catalyses the reaction (2R)-2-phosphoglycerate + ATP = (2R)-2,3-bisphosphoglycerate + ADP + H(+). It functions in the pathway thermoadapter biosynthesis; cyclic 2,3-diphosphoglycerate biosynthesis; cyclic 2,3-diphosphoglycerate from 2-phospho-D-glycerate: step 1/2. Catalyzes the phosphorylation of 2-phosphoglycerate to 2,3-diphosphoglycerate. Involved in the biosynthesis of cyclic 2,3-bisphosphoglycerate, a thermoprotectant. The protein is 2-phosphoglycerate kinase of Methanococcus maripaludis (strain C5 / ATCC BAA-1333).